The primary structure comprises 258 residues: Regulatory protein RecX (258 aa).

It belongs to the RecX family.

It is found in the cytoplasm. Functionally, modulates RecA activity. The sequence is that of Regulatory protein RecX from Streptococcus agalactiae serotype Ia (strain ATCC 27591 / A909 / CDC SS700).